Here is a 259-residue protein sequence, read N- to C-terminus: Isoepoxydon dehydrogenase patN (259 aa).

NADP(+) contacts are provided by aspartate 69, asparagine 96, and lysine 125. Active-site proton donor residues include serine 143 and serine 144. NADP(+)-binding residues include tyrosine 158, lysine 162, and valine 191. The active-site Proton acceptor is the tyrosine 158. The active-site Lowers pKa of active site Tyr is the lysine 162.

It belongs to the short-chain dehydrogenases/reductases (SDR) family.

It is found in the cytoplasm. It localises to the cytosol. The catalysed reaction is isoepoxydon + NADP(+) = phyllostine + NADPH + H(+). Its pathway is mycotoxin biosynthesis; patulin biosynthesis. Its function is as follows. Isoepoxydon dehydrogenase; part of the gene cluster that mediates the biosynthesis of patulin, an acetate-derived tetraketide mycotoxin produced by several fungal species that shows antimicrobial properties against several bacteria. PatN catalyzes the conversion of isoepoxydon into phyllostine. The pathway begins with the synthesis of 6-methylsalicylic acid by the polyketide synthase (PKS) patK via condensation of acetate and malonate units. The 6-methylsalicylic acid decarboxylase patG then catalyzes the decarboxylation of 6-methylsalicylic acid to yield m-cresol (also known as 3-methylphenol). These first reactions occur in the cytosol. The intermediate m-cresol is then transported into the endoplasmic reticulum where the cytochrome P450 monooxygenase patH converts it to m-hydroxybenzyl alcohol, which is further converted to gentisyl alcohol by the cytochrome P450 monooxygenase patI. The oxidoreductases patJ and patO further convert gentisyl alcohol to isoepoxydon in the vacuole. PatN catalyzes then the transformation of isoepoxydon into phyllostine. The cluster protein patF is responsible for the conversion from phyllostine to neopatulin whereas the alcohol dehydrogenase patD converts neopatulin to E-ascladiol. The steps between isoepoxydon and E-ascladiol occur in the cytosol, and E-ascladiol is probably secreted to the extracellular space by one of the cluster-specific transporters patC or patM. Finally, the secreted patulin synthase patE catalyzes the conversion of E-ascladiol to patulin. The sequence is that of Isoepoxydon dehydrogenase patN from Penicillium expansum (Blue mold rot fungus).